The sequence spans 95 residues: Co-chaperonin GroES (95 aa).

Belongs to the GroES chaperonin family. Heptamer of 7 subunits arranged in a ring. Interacts with the chaperonin GroEL.

The protein resides in the cytoplasm. Functionally, together with the chaperonin GroEL, plays an essential role in assisting protein folding. The GroEL-GroES system forms a nano-cage that allows encapsulation of the non-native substrate proteins and provides a physical environment optimized to promote and accelerate protein folding. GroES binds to the apical surface of the GroEL ring, thereby capping the opening of the GroEL channel. The chain is Co-chaperonin GroES from Maricaulis maris (strain MCS10) (Caulobacter maris).